A 245-amino-acid chain; its full sequence is Phycocyanobilin:ferredoxin oxidoreductase (245 aa).

Belongs to the HY2 family.

It catalyses the reaction (2R,3Z)-phycocyanobilin + 4 oxidized [2Fe-2S]-[ferredoxin] = biliverdin IXalpha + 4 reduced [2Fe-2S]-[ferredoxin] + 4 H(+). Functionally, catalyzes the four-electron reduction of biliverdin IX-alpha (2-electron reduction at both the A and D rings); the reaction proceeds via an isolatable 2-electron intermediate, 181,182-dihydrobiliverdin. In Trichormus variabilis (strain ATCC 29413 / PCC 7937) (Anabaena variabilis), this protein is Phycocyanobilin:ferredoxin oxidoreductase.